The primary structure comprises 103 residues: Small ribosomal subunit protein bS20 (103 aa).

The span at 1–20 shows a compositional bias: basic residues; it reads MATAKPKKKNPRLASGRKRV. The segment at 1–31 is disordered; it reads MATAKPKKKNPRLASGRKRVRQDTKLNAANT.

It belongs to the bacterial ribosomal protein bS20 family.

Functionally, binds directly to 16S ribosomal RNA. This chain is Small ribosomal subunit protein bS20, found in Polaromonas sp. (strain JS666 / ATCC BAA-500).